A 185-amino-acid chain; its full sequence is Ribosome-recycling factor (185 aa).

Belongs to the RRF family.

Its subcellular location is the cytoplasm. Responsible for the release of ribosomes from messenger RNA at the termination of protein biosynthesis. May increase the efficiency of translation by recycling ribosomes from one round of translation to another. The polypeptide is Ribosome-recycling factor (Streptococcus thermophilus (strain ATCC BAA-491 / LMD-9)).